Consider the following 162-residue polypeptide: Protein-export protein SecB (162 aa).

Belongs to the SecB family. As to quaternary structure, homotetramer, a dimer of dimers. One homotetramer interacts with 1 SecA dimer.

Its subcellular location is the cytoplasm. Its function is as follows. One of the proteins required for the normal export of preproteins out of the cell cytoplasm. It is a molecular chaperone that binds to a subset of precursor proteins, maintaining them in a translocation-competent state. It also specifically binds to its receptor SecA. This chain is Protein-export protein SecB, found in Legionella pneumophila (strain Paris).